The sequence spans 719 residues: Anaphase-promoting complex subunit 4 (719 aa).

The WD repeat unit spans residues N57–D96.

The APC/C is composed of at least 13 subunits: apc1, apc2, nuc2, apc4, apc5, cut9, apc8, apc10, apc11, hcn1, apc13, apc14 and apc15. Interacts with apc1 and dim1.

Functionally, component of the anaphase-promoting complex/cyclosome (APC/C), a cell cycle-regulated E3 ubiquitin-protein ligase complex that controls progression through mitosis and the G1 phase of the cell cycle. The APC/C is thought to confer substrate specificity and, in the presence of ubiquitin-conjugating E2 enzymes, it catalyzes the formation of protein-ubiquitin conjugates that are subsequently degraded by the 26S proteasome. Has a role in promoting metaphase to anaphase transition via the ubiquitination of specific mitotic substrates. The sequence is that of Anaphase-promoting complex subunit 4 (cut20) from Schizosaccharomyces pombe (strain 972 / ATCC 24843) (Fission yeast).